The primary structure comprises 236 residues: Ribose-5-phosphate isomerase (236 aa).

Substrate-binding positions include 27–30 (TGST), 84–87 (DGTD), and 97–100 (KGRG). Catalysis depends on glutamate 106, which acts as the Proton acceptor. Lysine 124 serves as a coordination point for substrate.

It belongs to the ribose 5-phosphate isomerase family. Homodimer.

It catalyses the reaction aldehydo-D-ribose 5-phosphate = D-ribulose 5-phosphate. Its pathway is carbohydrate degradation; pentose phosphate pathway; D-ribose 5-phosphate from D-ribulose 5-phosphate (non-oxidative stage): step 1/1. Its function is as follows. Involved in the first step of the non-oxidative branch of the pentose phosphate pathway. It catalyzes the reversible conversion of ribose-5-phosphate to ribulose 5-phosphate. The polypeptide is Ribose-5-phosphate isomerase (Plasmodium falciparum (isolate 3D7)).